Here is a 310-residue protein sequence, read N- to C-terminus: Mitochondrial citrate transporter F (310 aa).

3 Solcar repeats span residues 23 to 108 (KKVH…LKNH), 115 to 207 (PPGL…FKRL), and 216 to 303 (DNMG…HKKL). Helical transmembrane passes span 29 to 49 (FWFG…LDLV), 85 to 105 (SAAI…YEEL), 122 to 142 (IGMA…ADVL), 186 to 206 (NSTR…TFKR), 222 to 242 (FTAS…VDVI), and 275 to 296 (AFRG…TFIF).

The protein belongs to the mitochondrial carrier (TC 2.A.29) family.

Its subcellular location is the mitochondrion inner membrane. Functionally, mitochondrial transporter that does not mediate citrate export from mitochondria to cytoplasm. Its exact function has still to be determined. This is Mitochondrial citrate transporter F from Aspergillus niger (strain ATCC 1015 / CBS 113.46 / FGSC A1144 / LSHB Ac4 / NCTC 3858a / NRRL 328 / USDA 3528.7).